Here is a 317-residue protein sequence, read N- to C-terminus: MDRLELIKRNVQEIVTEEELEGLLNKKETPRAYVGYEPSGKIHMGHVLTVNKLIDLQKAGFKITVLLADVHAYLNRKGTLEEVRKIADYNRRCFIALGLDEEQTDFVYGSDFQLGAEYMLNVLKLSRAVTLNRAKRSMDEVGRAMDDPTVSQMVYPLMQAIDIALLEVDVAVGGIDQRKIHMLARENLKSLGFETPICIHTPILLGLDGTKMASSKDNFISVDDTEEEIYRKFKKAFCKMGDVEENPILALFRYHIFPRYETIVIERPEKFGGNLVYNSYSEMESGFAEEKVHPMDLKNSAAKYINEILDPVRKVLL.

Residue tyrosine 33 coordinates L-tyrosine. The short motif at 38–46 is the 'HIGH' region element; it reads PSGKIHMGH. Positions 155, 159, 162, and 177 each coordinate L-tyrosine. Positions 211–215 match the 'KMSKS' region motif; the sequence is KMASS. ATP is bound at residue serine 214.

It belongs to the class-I aminoacyl-tRNA synthetase family. TyrS type 3 subfamily. Homodimer.

Its subcellular location is the cytoplasm. It carries out the reaction tRNA(Tyr) + L-tyrosine + ATP = L-tyrosyl-tRNA(Tyr) + AMP + diphosphate + H(+). Functionally, catalyzes the attachment of tyrosine to tRNA(Tyr) in a two-step reaction: tyrosine is first activated by ATP to form Tyr-AMP and then transferred to the acceptor end of tRNA(Tyr). The chain is Tyrosine--tRNA ligase from Methanosarcina mazei (strain ATCC BAA-159 / DSM 3647 / Goe1 / Go1 / JCM 11833 / OCM 88) (Methanosarcina frisia).